A 759-amino-acid chain; its full sequence is Protein YdeP (759 aa).

[4Fe-4S] cluster contacts are provided by cysteine 49 and cysteine 52.

This sequence belongs to the prokaryotic molybdopterin-containing oxidoreductase family. [4Fe-4S] cluster is required as a cofactor. It depends on Mo-bis(molybdopterin guanine dinucleotide) as a cofactor.

Its function is as follows. Probably involved in acid resistance. This chain is Protein YdeP (ydeP), found in Escherichia coli (strain K12).